Consider the following 485-residue polypeptide: Serine/threonine-protein kinase dst4 (485 aa).

Residues 21 to 278 form the Protein kinase domain; that stretch reads FRVLEVIGQG…AVDLLNHPFI (258 aa). Residues 27 to 35 and K50 each bind ATP; that span reads IGQGSFGVV. D142 serves as the catalytic Proton acceptor. Disordered stretches follow at residues 304–343, 360–424, and 436–485; these read RRKKAEEEEAEEAEEGDDYDDVNGGGDERQHGSSVSSAGL, VMRE…GSVV, and SMKL…NQDD. Over residues 310 to 324 the composition is skewed to acidic residues; sequence EEEAEEAEEGDDYDD. Residues 370–393 show a composition bias toward low complexity; the sequence is SNNGGTFIYNNNNNNSSKTSSSGT. Composition is skewed to acidic residues over residues 406 to 417 and 450 to 468; these read DDDDDDDIEEGG and SSDEEDEEDEDDEDDEEGG. Residues 474–485 show a composition bias toward polar residues; it reads VVYTKSPVNQDD.

This sequence belongs to the protein kinase superfamily. STE Ser/Thr protein kinase family. STE20 subfamily. Requires Mg(2+) as cofactor.

It catalyses the reaction L-seryl-[protein] + ATP = O-phospho-L-seryl-[protein] + ADP + H(+). The catalysed reaction is L-threonyl-[protein] + ATP = O-phospho-L-threonyl-[protein] + ADP + H(+). This Dictyostelium discoideum (Social amoeba) protein is Serine/threonine-protein kinase dst4.